A 72-amino-acid chain; its full sequence is Translation initiation factor IF-1 (72 aa).

The 72-residue stretch at 1-72 folds into the S1-like domain; sequence MSKEDVIEVE…TRGRITWRKK (72 aa).

This sequence belongs to the IF-1 family. As to quaternary structure, component of the 30S ribosomal translation pre-initiation complex which assembles on the 30S ribosome in the order IF-2 and IF-3, IF-1 and N-formylmethionyl-tRNA(fMet); mRNA recruitment can occur at any time during PIC assembly.

The protein localises to the cytoplasm. Functionally, one of the essential components for the initiation of protein synthesis. Stabilizes the binding of IF-2 and IF-3 on the 30S subunit to which N-formylmethionyl-tRNA(fMet) subsequently binds. Helps modulate mRNA selection, yielding the 30S pre-initiation complex (PIC). Upon addition of the 50S ribosomal subunit IF-1, IF-2 and IF-3 are released leaving the mature 70S translation initiation complex. The chain is Translation initiation factor IF-1 from Alkaliphilus metalliredigens (strain QYMF).